Here is a 202-residue protein sequence, read N- to C-terminus: MNTLYLGSGSPRRMEILTQLGYRVVKLPAGIDETVKAGETPAPYVQRMAEEKNQAALTLFCETNGAMPDFPLITADTCVFSDGIILGKPRSQAEAIEFLNRLSGKQHTVLTAVCIHYRGKTSSRVQTNRVVFKPLSSEEISAYVQSGEPMEKAGAYAVQGIGGIFIQSIEGSFSGIMGLPVYETVSMLQDLGYRPPLSALKP.

The active-site Proton acceptor is the Asp-76.

Belongs to the Maf family. YhdE subfamily. A divalent metal cation is required as a cofactor.

Its subcellular location is the cytoplasm. It carries out the reaction dTTP + H2O = dTMP + diphosphate + H(+). The enzyme catalyses UTP + H2O = UMP + diphosphate + H(+). Nucleoside triphosphate pyrophosphatase that hydrolyzes dTTP and UTP. May have a dual role in cell division arrest and in preventing the incorporation of modified nucleotides into cellular nucleic acids. The protein is dTTP/UTP pyrophosphatase of Neisseria gonorrhoeae (strain ATCC 700825 / FA 1090).